The primary structure comprises 444 residues: Methylenetetrahydrofolate--tRNA-(uracil-5-)-methyltransferase TrmFO (444 aa).

Residue 9-14 coordinates FAD; the sequence is GAGMAG.

It belongs to the MnmG family. TrmFO subfamily. FAD serves as cofactor.

The protein resides in the cytoplasm. The enzyme catalyses uridine(54) in tRNA + (6R)-5,10-methylene-5,6,7,8-tetrahydrofolate + NADH + H(+) = 5-methyluridine(54) in tRNA + (6S)-5,6,7,8-tetrahydrofolate + NAD(+). It carries out the reaction uridine(54) in tRNA + (6R)-5,10-methylene-5,6,7,8-tetrahydrofolate + NADPH + H(+) = 5-methyluridine(54) in tRNA + (6S)-5,6,7,8-tetrahydrofolate + NADP(+). Its function is as follows. Catalyzes the folate-dependent formation of 5-methyl-uridine at position 54 (M-5-U54) in all tRNAs. The chain is Methylenetetrahydrofolate--tRNA-(uracil-5-)-methyltransferase TrmFO from Cereibacter sphaeroides (strain KD131 / KCTC 12085) (Rhodobacter sphaeroides).